A 67-amino-acid polypeptide reads, in one-letter code: ATP synthase F(0) complex subunit 8 (67 aa).

Residues 8–24 traverse the membrane as a helical segment; the sequence is TWLIMILSMILTLFITF. Lysine 54 bears the N6-acetyllysine; alternate mark. Lysine 54 carries the post-translational modification N6-succinyllysine; alternate. Lysine 57 is modified (N6-acetyllysine).

Belongs to the ATPase protein 8 family. In terms of assembly, component of the ATP synthase complex composed at least of ATP5F1A/subunit alpha, ATP5F1B/subunit beta, ATP5MC1/subunit c (homooctomer), MT-ATP6/subunit a, MT-ATP8/subunit 8, ATP5ME/subunit e, ATP5MF/subunit f, ATP5MG/subunit g, ATP5MK/subunit k, ATP5MJ/subunit j, ATP5F1C/subunit gamma, ATP5F1D/subunit delta, ATP5F1E/subunit epsilon, ATP5PF/subunit F6, ATP5PB/subunit b, ATP5PD/subunit d, ATP5PO/subunit OSCP. ATP synthase complex consists of a soluble F(1) head domain (subunits alpha(3) and beta(3)) - the catalytic core - and a membrane F(0) domain - the membrane proton channel (subunits c, a, 8, e, f, g, k and j). These two domains are linked by a central stalk (subunits gamma, delta, and epsilon) rotating inside the F1 region and a stationary peripheral stalk (subunits F6, b, d, and OSCP). Interacts with PRICKLE3.

Its subcellular location is the mitochondrion membrane. In terms of biological role, subunit 8, of the mitochondrial membrane ATP synthase complex (F(1)F(0) ATP synthase or Complex V) that produces ATP from ADP in the presence of a proton gradient across the membrane which is generated by electron transport complexes of the respiratory chain. ATP synthase complex consist of a soluble F(1) head domain - the catalytic core - and a membrane F(1) domain - the membrane proton channel. These two domains are linked by a central stalk rotating inside the F(1) region and a stationary peripheral stalk. During catalysis, ATP synthesis in the catalytic domain of F(1) is coupled via a rotary mechanism of the central stalk subunits to proton translocation. In vivo, can only synthesize ATP although its ATP hydrolase activity can be activated artificially in vitro. Part of the complex F(0) domain. The chain is ATP synthase F(0) complex subunit 8 from Phoca vitulina (Harbor seal).